Reading from the N-terminus, the 153-residue chain is Transcriptional repressor NrdR (153 aa).

The segment at 3 to 33 (CPYCNYKESKVIDSRHTDLKSIRRRRECESC) is a zinc-finger region. An ATP-cone domain is found at 48–138 (LMVIKKDNSR…VYRQFKDINT (91 aa)).

The protein belongs to the NrdR family. Zn(2+) is required as a cofactor.

In terms of biological role, negatively regulates transcription of bacterial ribonucleotide reductase nrd genes and operons by binding to NrdR-boxes. In Clostridioides difficile (strain 630) (Peptoclostridium difficile), this protein is Transcriptional repressor NrdR.